Here is a 261-residue protein sequence, read N- to C-terminus: Small ribosomal subunit protein eS1 (261 aa).

Basic residues predominate over residues 1–18 (MAVGKNKRISKGKKGGKK). Positions 1 to 20 (MAVGKNKRISKGKKGGKKKA) are disordered.

The protein belongs to the eukaryotic ribosomal protein eS1 family. In terms of assembly, component of the small ribosomal subunit. Mature ribosomes consist of a small (40S) and a large (60S) subunit. The 40S subunit contains about 33 different proteins and 1 molecule of RNA (18S). The 60S subunit contains about 49 different proteins and 3 molecules of RNA (25S, 5.8S and 5S).

The protein localises to the cytoplasm. The sequence is that of Small ribosomal subunit protein eS1 from Catharanthus roseus (Madagascar periwinkle).